A 216-amino-acid polypeptide reads, in one-letter code: Somatotropin (216 aa).

A signal peptide spans 1–25 (MAPGSWFSPLLIAVVTLGLPQEAAA). H45 contributes to the Zn(2+) binding site. A disulfide bridge links C78 with C189. Position 198 (E198) interacts with Zn(2+). An intrachain disulfide couples C206 to C214.

The protein belongs to the somatotropin/prolactin family.

It is found in the secreted. Its function is as follows. Growth hormone plays an important role in growth control. This chain is Somatotropin (GH), found in Gallus gallus (Chicken).